A 788-amino-acid chain; its full sequence is Glycerol-3-phosphate acyltransferase (788 aa).

The disordered stretch occupies residues 104 to 135 (LLPGRDPYHPNPRQQRRILRSDPQRARVMAGE). The HXXXXD motif signature appears at 271–276 (SHRSYI).

This sequence belongs to the GPAT/DAPAT family.

The protein localises to the cell membrane. It carries out the reaction sn-glycerol 3-phosphate + an acyl-CoA = a 1-acyl-sn-glycero-3-phosphate + CoA. The protein operates within phospholipid metabolism; CDP-diacylglycerol biosynthesis; CDP-diacylglycerol from sn-glycerol 3-phosphate: step 1/3. In Mycobacterium marinum (strain ATCC BAA-535 / M), this protein is Glycerol-3-phosphate acyltransferase.